Reading from the N-terminus, the 337-residue chain is Large ribosomal subunit protein uL3 (337 aa).

The segment at 1–26 (MGHAHAPRRGSLGYSPRVRARSQKPK) is disordered.

This sequence belongs to the universal ribosomal protein uL3 family. As to quaternary structure, part of the 50S ribosomal subunit. Forms a cluster with proteins L14 and L24e.

One of the primary rRNA binding proteins, it binds directly near the 3'-end of the 23S rRNA, where it nucleates assembly of the 50S subunit. The sequence is that of Large ribosomal subunit protein uL3 from Methanocella arvoryzae (strain DSM 22066 / NBRC 105507 / MRE50).